Here is a 294-residue protein sequence, read N- to C-terminus: Elongation factor Ts (294 aa).

Positions 79-82 are involved in Mg(2+) ion dislocation from EF-Tu; that stretch reads TDFV.

The protein belongs to the EF-Ts family.

The protein resides in the cytoplasm. Its function is as follows. Associates with the EF-Tu.GDP complex and induces the exchange of GDP to GTP. It remains bound to the aminoacyl-tRNA.EF-Tu.GTP complex up to the GTP hydrolysis stage on the ribosome. In Oceanobacillus iheyensis (strain DSM 14371 / CIP 107618 / JCM 11309 / KCTC 3954 / HTE831), this protein is Elongation factor Ts.